The chain runs to 464 residues: Protein ABHD18 (464 aa).

A signal peptide spans 1–24 (MGVSKLDILYRRLLLTKLFIRGWG). N341 carries an N-linked (GlcNAc...) asparagine glycan.

The protein belongs to the AB hydrolase superfamily.

It is found in the secreted. The sequence is that of Protein ABHD18 from Mus musculus (Mouse).